A 73-amino-acid chain; its full sequence is MKPSMAILLVIALIIFSLDKSYSANDKPIGKCGDAKRNKPCLACSHRSSIADFYSKCCTYDAVYNGCLDKLRH.

The signal sequence occupies residues 1–23; the sequence is MKPSMAILLVIALIIFSLDKSYS. Intrachain disulfides connect C32/C58, C41/C57, and C44/C67.

Contains 3 disulfide bonds. Expressed by the venom gland.

It localises to the secreted. In terms of biological role, inhibits voltage-gated potassium channels. In Scolopendra mutilans (Chinese red-headed centipede), this protein is Kappa-scoloptoxin(03)-Ssm1b.